Reading from the N-terminus, the 540-residue chain is Extracellular matrix protein 1 (540 aa).

A signal peptide spans 1–19; the sequence is MGTTARAALVLTYLAVASA. Disordered regions lie at residues 41–85 and 120–175; these read VGYA…EATP and LQHP…PSPD. Composition is skewed to polar residues over residues 71–85 and 146–156; these read GQSQ…EATP and NAAQHCQQDRS. Repeat copies occupy residues 150–279 and 283–405. Residues 150–405 form a 2 X approximate repeats region; that stretch reads HCQQDRSQGG…FARRAPYPNY (256 aa). An N-linked (GlcNAc...) asparagine glycan is attached at asparagine 354. Residue asparagine 444 is glycosylated (N-linked (GlcNAc...) (complex) asparagine). Positions 515-540 are disordered; that stretch reads ENAKGQGEQGSTGGTNISSTSEPKEE. A compositionally biased stretch (low complexity) spans 528–540; the sequence is GTNISSTSEPKEE. An N-linked (GlcNAc...) asparagine glycan is attached at asparagine 530.

In terms of assembly, interacts (via C-terminus) with HSPG2 (via C-terminus). Interacts with EFEMP1/FBLN3 and LAMB3. Interacts with MMP9. In terms of tissue distribution, expressed in breast cancer tissues. Little or no expression observed in normal breast tissues. Expressed in skin; wide expression is observed throughout the dermis with minimal expression in the epidermis.

Its subcellular location is the secreted. The protein resides in the extracellular space. It localises to the extracellular matrix. Functionally, involved in endochondral bone formation as negative regulator of bone mineralization. Stimulates the proliferation of endothelial cells and promotes angiogenesis. Inhibits MMP9 proteolytic activity. The polypeptide is Extracellular matrix protein 1 (ECM1) (Homo sapiens (Human)).